We begin with the raw amino-acid sequence, 130 residues long: Small ribosomal subunit protein uS9 (130 aa).

Residues 109–130 (RKKERKKYGQPGARAKFQYSKR) form a disordered region.

Belongs to the universal ribosomal protein uS9 family.

This is Small ribosomal subunit protein uS9 from Maridesulfovibrio salexigens (strain ATCC 14822 / DSM 2638 / NCIMB 8403 / VKM B-1763) (Desulfovibrio salexigens).